Consider the following 293-residue polypeptide: Urease accessory protein UreD (293 aa).

Residues 1–22 are disordered; sequence MAVAQQAWSPGADPAPSAAPVS. Residues 7-22 show a composition bias toward low complexity; it reads AWSPGADPAPSAAPVS.

The protein belongs to the UreD family. In terms of assembly, ureD, UreF and UreG form a complex that acts as a GTP-hydrolysis-dependent molecular chaperone, activating the urease apoprotein by helping to assemble the nickel containing metallocenter of UreC. The UreE protein probably delivers the nickel.

The protein localises to the cytoplasm. Required for maturation of urease via the functional incorporation of the urease nickel metallocenter. This chain is Urease accessory protein UreD, found in Alkalilimnicola ehrlichii (strain ATCC BAA-1101 / DSM 17681 / MLHE-1).